The following is a 411-amino-acid chain: Arginine deiminase (411 aa).

Cysteine 401 (amidino-cysteine intermediate) is an active-site residue.

The protein belongs to the arginine deiminase family.

It is found in the cytoplasm. The catalysed reaction is L-arginine + H2O = L-citrulline + NH4(+). It functions in the pathway amino-acid degradation; L-arginine degradation via ADI pathway; carbamoyl phosphate from L-arginine: step 1/2. The protein is Arginine deiminase of Streptococcus equi subsp. zooepidemicus (strain H70).